The primary structure comprises 152 residues: Arginine repressor (152 aa).

The protein belongs to the ArgR family.

The protein localises to the cytoplasm. It participates in amino-acid biosynthesis; L-arginine biosynthesis [regulation]. Regulates arginine biosynthesis genes. The chain is Arginine repressor from Thermotoga sp. (strain RQ2).